The primary structure comprises 244 residues: Phosphoadenosine 5'-phosphosulfate reductase (244 aa).

Cysteine 239 (nucleophile; cysteine thiosulfonate intermediate) is an active-site residue.

It belongs to the PAPS reductase family. CysH subfamily.

It localises to the cytoplasm. The enzyme catalyses [thioredoxin]-disulfide + sulfite + adenosine 3',5'-bisphosphate + 2 H(+) = [thioredoxin]-dithiol + 3'-phosphoadenylyl sulfate. It functions in the pathway sulfur metabolism; hydrogen sulfide biosynthesis; sulfite from sulfate: step 3/3. In terms of biological role, catalyzes the formation of sulfite from phosphoadenosine 5'-phosphosulfate (PAPS) using thioredoxin as an electron donor. This Salmonella typhi protein is Phosphoadenosine 5'-phosphosulfate reductase.